Consider the following 346-residue polypeptide: S-adenosylmethionine:tRNA ribosyltransferase-isomerase (346 aa).

The protein belongs to the QueA family. In terms of assembly, monomer.

It is found in the cytoplasm. It catalyses the reaction 7-aminomethyl-7-carbaguanosine(34) in tRNA + S-adenosyl-L-methionine = epoxyqueuosine(34) in tRNA + adenine + L-methionine + 2 H(+). The protein operates within tRNA modification; tRNA-queuosine biosynthesis. In terms of biological role, transfers and isomerizes the ribose moiety from AdoMet to the 7-aminomethyl group of 7-deazaguanine (preQ1-tRNA) to give epoxyqueuosine (oQ-tRNA). This chain is S-adenosylmethionine:tRNA ribosyltransferase-isomerase, found in Borreliella afzelii (strain PKo) (Borrelia afzelii).